A 473-amino-acid chain; its full sequence is Photosystem II CP43 reaction center protein (473 aa).

The propeptide occupies 1–14; that stretch reads MKTLYSLRRSYPVE. Position 15 is an N-acetylthreonine (Thr15). Residue Thr15 is modified to Phosphothreonine. 5 helical membrane-spanning segments follow: residues 69-93, 134-155, 178-200, 255-275, and 291-312; these read LFEV…PHLA, LIGP…KDKN, KALY…RKIT, KPFA…LSYS, and WFNN…ASQA. Position 367 (Glu367) interacts with [CaMn4O5] cluster. The chain crosses the membrane as a helical span at residues 447-471; that stretch reads RARAAAAGFEKGIDRDTEPVLFMNP.

This sequence belongs to the PsbB/PsbC family. PsbC subfamily. In terms of assembly, PSII is composed of 1 copy each of membrane proteins PsbA, PsbB, PsbC, PsbD, PsbE, PsbF, PsbH, PsbI, PsbJ, PsbK, PsbL, PsbM, PsbT, PsbX, PsbY, PsbZ, Psb30/Ycf12, at least 3 peripheral proteins of the oxygen-evolving complex and a large number of cofactors. It forms dimeric complexes. It depends on Binds multiple chlorophylls and provides some of the ligands for the Ca-4Mn-5O cluster of the oxygen-evolving complex. It may also provide a ligand for a Cl- that is required for oxygen evolution. PSII binds additional chlorophylls, carotenoids and specific lipids. as a cofactor.

The protein localises to the plastid. The protein resides in the chloroplast thylakoid membrane. Functionally, one of the components of the core complex of photosystem II (PSII). It binds chlorophyll and helps catalyze the primary light-induced photochemical processes of PSII. PSII is a light-driven water:plastoquinone oxidoreductase, using light energy to abstract electrons from H(2)O, generating O(2) and a proton gradient subsequently used for ATP formation. This is Photosystem II CP43 reaction center protein from Zygnema circumcarinatum (Green alga).